We begin with the raw amino-acid sequence, 624 residues long: MNESLTEKRNELSLSFAALGVVFGDIGTSPLYAFGQVIKYFPINDYNIYGILSLIFWSLIIIVSIKYLVIVFRADNDGEGGIIALAGVIRQKIKKPGGWLLFITLVGIGLIIGDGMLTPAISILSAVEGLESLSPNLAKYVLPVTLIILFFLFKMQSIGTGKIGVYFAPVMLVWFITIGILGFLQIIQNPKVLMAINPYYAINFFMIHQYSALFILGGVFLVMTGGEALFADLGHFGKKAIRTGWFAVALPALLLCYFGQGAFVLMHTEDIKYPFFSLSPDWFLPVMIILATLATIIASQAIISAAFSILKQASLLNLIPRLKIVFTSKFEKGEVYLPLINFILALGTCSLVVIFKSSSNLADAYGIAVNLDMLITTVLVGIIAYRCWSWHAFKILIFLLILIIELAFFAGNIPKLLTGGWIPVLIAFLGFVVMYTWHCGFEKLRELHHRDALMDAFIIDELNQNKISRQPGMGLYIIDPYDYEGESLLHHLRLNRIFFENMVFVSIKIENKPYIPIEDKFELIKKAEGFYLIFIHYGFTENINLPNELDEMFKRVYLPFDIIKNKLIYFIEIVFVEMTGERQKHMYLWQKHFFSLMIRNAVPDIQFYQLPYNNTIAIGTYYQF.

The next 12 membrane-spanning stretches (helical) occupy residues 14 to 34 (LSFA…LYAF), 51 to 71 (ILSL…LVIV), 97 to 117 (GGWL…DGML), 133 to 153 (LSPN…FFLF), 163 to 183 (IGVY…ILGF), 211 to 231 (SALF…ALFA), 245 to 265 (WFAV…AFVL), 283 to 303 (FLPV…QAII), 335 to 355 (VYLP…VVIF), 364 to 384 (AYGI…GIIA), 393 to 413 (FKIL…AGNI), and 416 to 436 (LLTG…VMYT).

This sequence belongs to the HAK/KUP transporter (TC 2.A.72) family.

It is found in the cell inner membrane. The enzyme catalyses K(+)(in) + H(+)(in) = K(+)(out) + H(+)(out). Functionally, transport of potassium into the cell. Likely operates as a K(+):H(+) symporter. This chain is Probable potassium transport system protein Kup 2, found in Legionella pneumophila (strain Lens).